The sequence spans 377 residues: Interferon gamma receptor 1 (377 aa).

Positions 1–23 (MRTQIYISVTVLILLLKKSDLEA) are cleaved as a signal peptide. The Extracellular portion of the chain corresponds to 24–235 (VRVPSPESVS…IRRYTPFTVY (212 aa)). The region spanning 26–117 (VPSPESVSVQ…DFFIFSFNEN (92 aa)) is the Fibronectin type-III domain. N-linked (GlcNAc...) asparagine glycosylation is found at Asn-78 and Asn-186. A helical membrane pass occupies residues 236–256 (LYPVLGVTLTLLFITGIIILL). Residues 257–377 (EKKCNSEMKK…TVDSYGPRLL (121 aa)) lie on the Cytoplasmic side of the membrane. A disordered region spans residues 326–377 (VYSEDKNSYGPNDLVEDEQSDLSDFYDCPHAPKQKREMSPGDTVDSYGPRLL).

Belongs to the type II cytokine receptor family. As to expression, highly expressed in spleen. Also detected in brain, kidney, gill, intestine and heart. Expressed at very low levels in muscle. In immune cell populations, shows highest expression in monocytes, and slightly lower expression in peripheral blood leukocytes, splenocytes, neutrophils and mature macrophages.

The protein resides in the cell membrane. In terms of biological role, receptor which shows binding specificity for the cytokine ifng1r (interferon gamma-related). The polypeptide is Interferon gamma receptor 1 (Carassius auratus (Goldfish)).